The chain runs to 25 residues: Glucomannokinase (25 aa).

This sequence belongs to the ROK (NagC/XylR) family. In terms of assembly, homodimer.

It catalyses the reaction D-glucose + ATP = D-glucose 6-phosphate + ADP + H(+). The enzyme catalyses D-mannose + ATP = D-mannose 6-phosphate + ADP + H(+). It participates in carbohydrate degradation; glycolysis; D-glyceraldehyde 3-phosphate and glycerone phosphate from D-glucose: step 1/4. Its pathway is carbohydrate metabolism; mannose metabolism. With respect to regulation, competitively inhibited by 2-deoxy-glucose. The enzyme has great affinity for glucose and mannose. This Segatella bryantii (Prevotella bryantii) protein is Glucomannokinase.